Consider the following 544-residue polypeptide: Chaperonin GroEL 2 (544 aa).

ATP contacts are provided by residues 30-33 (TLGP), 87-91 (DGTTT), glycine 415, 480-482 (NAA), and aspartate 496.

This sequence belongs to the chaperonin (HSP60) family. As to quaternary structure, forms a cylinder of 14 subunits composed of two heptameric rings stacked back-to-back. Interacts with the co-chaperonin GroES.

It is found in the cytoplasm. It catalyses the reaction ATP + H2O + a folded polypeptide = ADP + phosphate + an unfolded polypeptide.. Together with its co-chaperonin GroES, plays an essential role in assisting protein folding. The GroEL-GroES system forms a nano-cage that allows encapsulation of the non-native substrate proteins and provides a physical environment optimized to promote and accelerate protein folding. The chain is Chaperonin GroEL 2 from Albidiferax ferrireducens (strain ATCC BAA-621 / DSM 15236 / T118) (Rhodoferax ferrireducens).